The sequence spans 117 residues: Prefoldin subunit beta (117 aa).

Belongs to the prefoldin subunit beta family. As to quaternary structure, heterohexamer of two alpha and four beta subunits.

It localises to the cytoplasm. In terms of biological role, molecular chaperone capable of stabilizing a range of proteins. Seems to fulfill an ATP-independent, HSP70-like function in archaeal de novo protein folding. The chain is Prefoldin subunit beta (pfdB) from Pyrococcus horikoshii (strain ATCC 700860 / DSM 12428 / JCM 9974 / NBRC 100139 / OT-3).